The sequence spans 4699 residues: Fat-like cadherin-related tumor suppressor homolog (4699 aa).

Positions 1 to 38 (MFTMKIKKYVTPVKRKAFTILQWISLLCSLWLIPTVQS) are cleaved as a signal peptide. Topologically, residues 39 to 4285 (KADEKHTATL…KNFSIEHISG (4247 aa)) are extracellular. 34 Cadherin domains span residues 63 to 183 (SHSV…SPLF), 184 to 291 (YPTQ…APEI), 288 to 400 (APEI…IPIF), 401 to 507 (TQEI…DPIF), 508 to 613 (ENVN…RPQF), 614 to 716 (ERVN…SSIL), 773 to 877 (VNFP…RPVI), 878 to 980 (QKTL…APVF), 981 to 1088 (GVQE…APEF), 1089 to 1198 (DDFV…KPVY), 1194 to 1299 (DKPV…SPEF), 1300 to 1405 (DQRV…APLI), 1408 to 1506 (KTSE…PPQF), 1507 to 1612 (AKDV…HPEF), 1613 to 1717 (TAKI…PPKF), 1718 to 1815 (PTNN…IPYF), 1816 to 1932 (VQNE…PPVF), 1933 to 2033 (NERE…NFAF), 2034 to 2140 (QRES…CPLF), 2141 to 2241 (VNMP…MPVF), 2242 to 2341 (EKQF…YPEI), 2342 to 2449 (ESDI…APCF), 2450 to 2551 (VEPS…SPLF), 2552 to 2654 (DQST…VPYF), 2655 to 2763 (LLKE…IPTF), 2764 to 2860 (EKSS…YPKF), 2861 to 2967 (DNTF…APVF), 2968 to 3072 (KLPI…KPRY), 3068 to 3169 (LKPR…MPIF), 3170 to 3273 (SMAQ…PPEF), 3274 to 3378 (SMRQ…SPTF), 3379 to 3483 (LQNL…APIF), 3484 to 3588 (SSSN…PPIV), and 3589 to 3696 (TPLE…VIRF). Residues Asn-68 and Asn-159 are each glycosylated (N-linked (GlcNAc...) asparagine). A glycan (N-linked (GlcNAc...) asparagine) is linked at Asn-367. N-linked (GlcNAc...) asparagine glycans are attached at residues Asn-782, Asn-846, and Asn-926. N-linked (GlcNAc...) asparagine glycosylation is found at Asn-1109, Asn-1201, Asn-1315, Asn-1442, Asn-1476, and Asn-1514. Cystine bridges form between Cys-3807–Cys-3819, Cys-3814–Cys-3851, Cys-3853–Cys-3862, Cys-3869–Cys-3880, Cys-3874–Cys-3891, Cys-3893–Cys-3902, Cys-4071–Cys-4105, Cys-4117–Cys-4128, Cys-4122–Cys-4138, Cys-4140–Cys-4149, Cys-4156–Cys-4167, Cys-4161–Cys-4177, Cys-4179–Cys-4188, Cys-4194–Cys-4205, Cys-4199–Cys-4214, Cys-4216–Cys-4224, Cys-4231–Cys-4242, Cys-4236–Cys-4251, and Cys-4253–Cys-4262. The EGF-like 1 domain maps to 3865–3903 (TVNACSTDPCSPQRICMPSGSALGYQCVCPKGFSGTYCE). The region spanning 3921-4105 (AVSFGGKSYA…KRFTNVEFKC (185 aa)) is the Laminin G-like domain. 4 EGF-like domains span residues 4113 to 4150 (RLGICGSQPCANSGICKELDTDVFECACQPRYSGKHCE), 4152 to 4189 (DLDPCSSGPCLFGGRCDYHGPNNYSCTCPIHLSGKRCE), 4190 to 4225 (YGKFCTPNPCKNGGICEEGDGISHCMCRGYTGPTCE), and 4227 to 4263 (DVDECENQPCGNGATCINEPGSFRCICPSYLTGASCG). A helical membrane pass occupies residues 4286 to 4306 (IISGVAVVLVIISCVLCCVVL). At 4307–4699 (KRSSSSKRRN…EFLPQQQTNN (393 aa)) the chain is on the cytoplasmic side.

As to expression, localizes where basal actin filaments terminate.

Its subcellular location is the cell membrane. In terms of biological role, required for the planar polarity of actin filament orientation at the basal side of ovarian follicle cells. Required for proper egg chamber shape and elongation of the egg chamber during oogenesis. Required for the correct planar polarization of Rab10 within the basal follicle cell epithelium and is therefore indirectly involved in the Rab10-dependent remodeling of the basal membrane during egg chamber elongation. The polypeptide is Fat-like cadherin-related tumor suppressor homolog (kug) (Drosophila melanogaster (Fruit fly)).